A 390-amino-acid polypeptide reads, in one-letter code: Multidrug resistance protein MdtL (390 aa).

Helical transmembrane passes span 4–24 (FLIC…MYLV), 42–62 (IAFS…GKVA), 69–89 (PVAI…SRAT), 93–113 (LFLT…VVAF), 131–151 (LLNG…HLIM), 158–178 (SLFY…VFIL), 199–221 (LLNR…ILTF), 245–265 (ALTA…LSVF), 269–289 (TLML…SLSS), 293–313 (VTLF…GVAM), 316–336 (ALGP…IAQV), and 353–375 (ALNM…LMTI).

Belongs to the major facilitator superfamily. DHA1 family. MdtL (TC 2.A.1.2.22) subfamily.

It localises to the cell inner membrane. The chain is Multidrug resistance protein MdtL from Citrobacter koseri (strain ATCC BAA-895 / CDC 4225-83 / SGSC4696).